The primary structure comprises 307 residues: Homoserine kinase (307 aa).

91–101 (PLARGLGSSAA) contributes to the ATP binding site.

This sequence belongs to the GHMP kinase family. Homoserine kinase subfamily.

It is found in the cytoplasm. The catalysed reaction is L-homoserine + ATP = O-phospho-L-homoserine + ADP + H(+). It participates in amino-acid biosynthesis; L-threonine biosynthesis; L-threonine from L-aspartate: step 4/5. Catalyzes the ATP-dependent phosphorylation of L-homoserine to L-homoserine phosphate. The polypeptide is Homoserine kinase (Deinococcus radiodurans (strain ATCC 13939 / DSM 20539 / JCM 16871 / CCUG 27074 / LMG 4051 / NBRC 15346 / NCIMB 9279 / VKM B-1422 / R1)).